Reading from the N-terminus, the 268-residue chain is MEMO1 family protein Ta0237 (268 aa).

The protein belongs to the MEMO1 family.

The chain is MEMO1 family protein Ta0237 from Thermoplasma acidophilum (strain ATCC 25905 / DSM 1728 / JCM 9062 / NBRC 15155 / AMRC-C165).